Here is a 157-residue protein sequence, read N- to C-terminus: Large ribosomal subunit protein uL22 (157 aa).

It belongs to the universal ribosomal protein uL22 family. As to quaternary structure, part of the 50S ribosomal subunit.

This protein binds specifically to 23S rRNA. It makes multiple contacts with different domains of the 23S rRNA in the assembled 50S subunit and ribosome. Functionally, the globular domain of the protein is located near the polypeptide exit tunnel on the outside of the subunit, while an extended beta-hairpin is found that lines the wall of the exit tunnel in the center of the 70S ribosome. This chain is Large ribosomal subunit protein uL22, found in Methanocorpusculum labreanum (strain ATCC 43576 / DSM 4855 / Z).